Here is a 74-residue protein sequence, read N- to C-terminus: Small ribosomal subunit protein bS18 (74 aa).

Belongs to the bacterial ribosomal protein bS18 family. Part of the 30S ribosomal subunit. Forms a tight heterodimer with protein bS6.

Binds as a heterodimer with protein bS6 to the central domain of the 16S rRNA, where it helps stabilize the platform of the 30S subunit. The polypeptide is Small ribosomal subunit protein bS18 (Sphingopyxis alaskensis (strain DSM 13593 / LMG 18877 / RB2256) (Sphingomonas alaskensis)).